A 259-amino-acid polypeptide reads, in one-letter code: Phosphatidylserine decarboxylase proenzyme (259 aa).

Ser183 acts as the Schiff-base intermediate with substrate; via pyruvic acid in catalysis. The residue at position 183 (Ser183) is a Pyruvic acid (Ser); by autocatalysis.

It belongs to the phosphatidylserine decarboxylase family. PSD-A subfamily. Heterodimer of a large membrane-associated beta subunit and a small pyruvoyl-containing alpha subunit. Pyruvate serves as cofactor. Is synthesized initially as an inactive proenzyme. Formation of the active enzyme involves a self-maturation process in which the active site pyruvoyl group is generated from an internal serine residue via an autocatalytic post-translational modification. Two non-identical subunits are generated from the proenzyme in this reaction, and the pyruvate is formed at the N-terminus of the alpha chain, which is derived from the carboxyl end of the proenzyme. The post-translation cleavage follows an unusual pathway, termed non-hydrolytic serinolysis, in which the side chain hydroxyl group of the serine supplies its oxygen atom to form the C-terminus of the beta chain, while the remainder of the serine residue undergoes an oxidative deamination to produce ammonia and the pyruvoyl prosthetic group on the alpha chain.

It localises to the cell membrane. The enzyme catalyses a 1,2-diacyl-sn-glycero-3-phospho-L-serine + H(+) = a 1,2-diacyl-sn-glycero-3-phosphoethanolamine + CO2. Its pathway is phospholipid metabolism; phosphatidylethanolamine biosynthesis; phosphatidylethanolamine from CDP-diacylglycerol: step 2/2. Functionally, catalyzes the formation of phosphatidylethanolamine (PtdEtn) from phosphatidylserine (PtdSer). The polypeptide is Phosphatidylserine decarboxylase proenzyme (Neisseria gonorrhoeae (strain ATCC 700825 / FA 1090)).